The chain runs to 181 residues: ATP-dependent protease subunit HslV (181 aa).

The active site involves T7. Residues A162, C165, and T168 each coordinate Na(+).

This sequence belongs to the peptidase T1B family. HslV subfamily. A double ring-shaped homohexamer of HslV is capped on each side by a ring-shaped HslU homohexamer. The assembly of the HslU/HslV complex is dependent on binding of ATP.

It is found in the cytoplasm. It carries out the reaction ATP-dependent cleavage of peptide bonds with broad specificity.. With respect to regulation, allosterically activated by HslU binding. In terms of biological role, protease subunit of a proteasome-like degradation complex believed to be a general protein degrading machinery. This chain is ATP-dependent protease subunit HslV, found in Coxiella burnetii (strain RSA 331 / Henzerling II).